The primary structure comprises 229 residues: Ribose-5-phosphate isomerase A (229 aa).

Substrate contacts are provided by residues 28-31 (TGST), 85-88 (DGAD), and 98-101 (KGRG). Glu-107 acts as the Proton acceptor in catalysis. Lys-125 is a substrate binding site.

This sequence belongs to the ribose 5-phosphate isomerase family. As to quaternary structure, homotetramer.

The catalysed reaction is aldehydo-D-ribose 5-phosphate = D-ribulose 5-phosphate. Its pathway is carbohydrate degradation; pentose phosphate pathway; D-ribose 5-phosphate from D-ribulose 5-phosphate (non-oxidative stage): step 1/1. Inhibited by D-4-phosphoerythronic acid. Involved in the first step of the non-oxidative branch of the pentose phosphate pathway. It catalyzes the reversible conversion of ribose-5-phosphate to ribulose 5-phosphate. The sequence is that of Ribose-5-phosphate isomerase A from Pyrococcus horikoshii (strain ATCC 700860 / DSM 12428 / JCM 9974 / NBRC 100139 / OT-3).